Reading from the N-terminus, the 379-residue chain is Alcohol dehydrogenase class-3 (379 aa).

Zn(2+) contacts are provided by C47, H69, C99, C102, C105, C113, and C176.

It belongs to the zinc-containing alcohol dehydrogenase family. Class-III subfamily. In terms of assembly, homodimer. The cofactor is Zn(2+).

It is found in the cytoplasm. The enzyme catalyses a primary alcohol + NAD(+) = an aldehyde + NADH + H(+). It catalyses the reaction a secondary alcohol + NAD(+) = a ketone + NADH + H(+). It carries out the reaction S-(hydroxymethyl)glutathione + NADP(+) = S-formylglutathione + NADPH + H(+). The catalysed reaction is S-(hydroxymethyl)glutathione + NAD(+) = S-formylglutathione + NADH + H(+). In terms of biological role, class-III ADH is remarkably ineffective in oxidizing ethanol, but it readily catalyzes the oxidation of long-chain primary alcohols and the oxidation of S-(hydroxymethyl) glutathione. This Dictyostelium discoideum (Social amoeba) protein is Alcohol dehydrogenase class-3 (adh5).